We begin with the raw amino-acid sequence, 253 residues long: Hydroxyacylglutathione hydrolase (253 aa).

Zn(2+)-binding residues include histidine 54, histidine 56, aspartate 58, histidine 59, histidine 110, aspartate 127, and histidine 165.

The protein belongs to the metallo-beta-lactamase superfamily. Glyoxalase II family. As to quaternary structure, monomer. It depends on Zn(2+) as a cofactor.

The catalysed reaction is an S-(2-hydroxyacyl)glutathione + H2O = a 2-hydroxy carboxylate + glutathione + H(+). It participates in secondary metabolite metabolism; methylglyoxal degradation; (R)-lactate from methylglyoxal: step 2/2. Its function is as follows. Thiolesterase that catalyzes the hydrolysis of S-D-lactoyl-glutathione to form glutathione and D-lactic acid. The protein is Hydroxyacylglutathione hydrolase of Idiomarina loihiensis (strain ATCC BAA-735 / DSM 15497 / L2-TR).